Here is a 159-residue protein sequence, read N- to C-terminus: Small ribosomal subunit protein uS17y (159 aa).

This sequence belongs to the universal ribosomal protein uS17 family.

It localises to the cytoplasm. This chain is Small ribosomal subunit protein uS17y (RPS11B), found in Arabidopsis thaliana (Mouse-ear cress).